We begin with the raw amino-acid sequence, 179 residues long: ATP synthase subunit delta (179 aa).

It belongs to the ATPase delta chain family. F-type ATPases have 2 components, F(1) - the catalytic core - and F(0) - the membrane proton channel. F(1) has five subunits: alpha(3), beta(3), gamma(1), delta(1), epsilon(1). F(0) has three main subunits: a(1), b(2) and c(10-14). The alpha and beta chains form an alternating ring which encloses part of the gamma chain. F(1) is attached to F(0) by a central stalk formed by the gamma and epsilon chains, while a peripheral stalk is formed by the delta and b chains.

It localises to the cell membrane. Its function is as follows. F(1)F(0) ATP synthase produces ATP from ADP in the presence of a proton or sodium gradient. F-type ATPases consist of two structural domains, F(1) containing the extramembraneous catalytic core and F(0) containing the membrane proton channel, linked together by a central stalk and a peripheral stalk. During catalysis, ATP synthesis in the catalytic domain of F(1) is coupled via a rotary mechanism of the central stalk subunits to proton translocation. Functionally, this protein is part of the stalk that links CF(0) to CF(1). It either transmits conformational changes from CF(0) to CF(1) or is implicated in proton conduction. This Staphylococcus carnosus (strain TM300) protein is ATP synthase subunit delta.